The sequence spans 200 residues: Endoribonuclease YbeY (200 aa).

3 residues coordinate Zn(2+): His120, His124, and His130.

The protein belongs to the endoribonuclease YbeY family. It depends on Zn(2+) as a cofactor.

It localises to the cytoplasm. In terms of biological role, single strand-specific metallo-endoribonuclease involved in late-stage 70S ribosome quality control and in maturation of the 3' terminus of the 16S rRNA. This Corynebacterium efficiens (strain DSM 44549 / YS-314 / AJ 12310 / JCM 11189 / NBRC 100395) protein is Endoribonuclease YbeY.